The primary structure comprises 498 residues: ATP synthase subunit beta, chloroplastic (498 aa).

172–179 (GGAGVGKT) contributes to the ATP binding site.

This sequence belongs to the ATPase alpha/beta chains family. As to quaternary structure, F-type ATPases have 2 components, CF(1) - the catalytic core - and CF(0) - the membrane proton channel. CF(1) has five subunits: alpha(3), beta(3), gamma(1), delta(1), epsilon(1). CF(0) has four main subunits: a(1), b(1), b'(1) and c(9-12).

The protein resides in the plastid. The protein localises to the chloroplast thylakoid membrane. It carries out the reaction ATP + H2O + 4 H(+)(in) = ADP + phosphate + 5 H(+)(out). In terms of biological role, produces ATP from ADP in the presence of a proton gradient across the membrane. The catalytic sites are hosted primarily by the beta subunits. This is ATP synthase subunit beta, chloroplastic from Hyophorbe lagenicaulis (Bottle palm).